The chain runs to 524 residues: Probable cytochrome P450 12c1, mitochondrial (524 aa).

Heme is bound at residue cysteine 470.

The protein belongs to the cytochrome P450 family. The cofactor is heme.

It is found in the mitochondrion membrane. This chain is Probable cytochrome P450 12c1, mitochondrial (Cyp12c1), found in Drosophila melanogaster (Fruit fly).